The chain runs to 186 residues: MASEDPSVSGVSGRYATALFELARDEKVIDAVKADLDKFSAMLVESPELLRLVRSPVFGAEAQTKALGAVLDKAGIAGISANFLKLLAANRRLFVVADVIGAYRALVARFKGEATADVTVAETLSDKNLEALKLALKSVTGKDVTLNINVDPAIIGGLVVKLGSRMVDSSIRTKLNSIKHAMKEAG.

Belongs to the ATPase delta chain family. As to quaternary structure, F-type ATPases have 2 components, F(1) - the catalytic core - and F(0) - the membrane proton channel. F(1) has five subunits: alpha(3), beta(3), gamma(1), delta(1), epsilon(1). CF(0) has four main subunits: a(1), b(1), b'(1) and c(10-14). The alpha and beta chains form an alternating ring which encloses part of the gamma chain. F(1) is attached to F(0) by a central stalk formed by the gamma and epsilon chains, while a peripheral stalk is formed by the delta, b and b' chains.

It localises to the cell inner membrane. Functionally, f(1)F(0) ATP synthase produces ATP from ADP in the presence of a proton or sodium gradient. F-type ATPases consist of two structural domains, F(1) containing the extramembraneous catalytic core and F(0) containing the membrane proton channel, linked together by a central stalk and a peripheral stalk. During catalysis, ATP synthesis in the catalytic domain of F(1) is coupled via a rotary mechanism of the central stalk subunits to proton translocation. In terms of biological role, this protein is part of the stalk that links CF(0) to CF(1). It either transmits conformational changes from CF(0) to CF(1) or is implicated in proton conduction. The chain is ATP synthase subunit delta from Rhodopseudomonas palustris (strain BisB5).